Here is a 358-residue protein sequence, read N- to C-terminus: Serine/threonine-protein phosphatase 2A activator (358 aa).

The disordered stretch occupies residues 1-20 (MAEGERQPPPDSSEEAPPAT). N-acetylalanine is present on alanine 2. Residues arginine 183, threonine 188, and glycine 189 each coordinate ATP. Residues glycine 243 and aspartate 249 each coordinate Mg(2+). ATP contacts are provided by proline 339, glutamine 342, and histidine 343.

This sequence belongs to the PTPA-type PPIase family. In terms of assembly, associates with PP2A heterodimeric core enzyme PP2A(D), composed of a 36 kDa catalytic subunit (subunit C) and a 65 kDa constant regulatory subunit (PR65 or subunit A). Interacts with the catalytic subunit PPP2CA (via C-terminus). Interacts with PPP2CB. In terms of tissue distribution, widely expressed.

The protein resides in the cytoplasm. It localises to the nucleus. It catalyses the reaction [protein]-peptidylproline (omega=180) = [protein]-peptidylproline (omega=0). In terms of biological role, PPIases accelerate the folding of proteins. It catalyzes the cis-trans isomerization of proline imidic peptide bonds in oligopeptides. Acts as a regulatory subunit for serine/threonine-protein phosphatase 2A (PP2A). Modulates PP2A activity or substrate specificity, probably by inducing a conformational change in the catalytic subunit, a proposed direct target of the PPIase. Can reactivate inactive phosphatase PP2A-phosphatase methylesterase complexes (PP2A(i)) in presence of ATP and Mg(2+). Reversibly stimulates the variable phosphotyrosyl phosphatase activity of PP2A core heterodimer PP2A(D) in presence of ATP and Mg(2+) (in vitro). The phosphotyrosyl phosphatase activity is dependent of an ATPase activity of the PP2A(D):PPP2R4 complex. Is involved in apoptosis; the function appears to be independent from PP2A. The sequence is that of Serine/threonine-protein phosphatase 2A activator from Homo sapiens (Human).